The primary structure comprises 308 residues: Adult enhancer factor 1 (308 aa).

2 disordered regions span residues 50–94 (AHMA…PLPF) and 123–143 (QAAA…THLT). Positions 56–76 (QQQQQQQQQQQQQHHQQQQQQ) are enriched in low complexity. The segment covering 81 to 90 (PSVPPPPTEL) has biased composition (pro residues). C2H2-type zinc fingers lie at residues 184–206 (FHCT…VKIH), 212–234 (YKCN…LKIH), 240–262 (YNCN…VKIH), and 268–290 (FECV…IKIH).

Found in all tissues examined including the ovary and the fat body.

The protein localises to the nucleus. In terms of biological role, transcriptional repressor that binds specifically to fat body-specific enhancers, namely the adult ADH enhancer (AAE) and the enhancer that controls yolk protein gene expression. This chain is Adult enhancer factor 1 (Aef1), found in Drosophila melanogaster (Fruit fly).